A 667-amino-acid chain; its full sequence is Probable E3 ubiquitin-protein ligase HIP1 (667 aa).

2 disordered regions span residues asparagine 142–alanine 163 and threonine 285–arginine 311. Residues glycine 288–serine 309 show a composition bias toward low complexity. Residues cysteine 620–lysine 661 form an RING-type; atypical zinc finger.

This sequence belongs to the RING-type zinc finger family. In terms of assembly, interacts with HAL3.

It carries out the reaction S-ubiquitinyl-[E2 ubiquitin-conjugating enzyme]-L-cysteine + [acceptor protein]-L-lysine = [E2 ubiquitin-conjugating enzyme]-L-cysteine + N(6)-ubiquitinyl-[acceptor protein]-L-lysine.. It functions in the pathway protein modification; protein ubiquitination. Functionally, probable E3 ubiquitin-protein ligase that functions downstream of HAL3 and is required for HAL3-regulated plant growth. Activation of HIP1 by HAL3 may lead to the degradation of cell cycle suppressors, resulting in enhancement of cell division and plant growth. This is Probable E3 ubiquitin-protein ligase HIP1 (HIP1) from Oryza sativa subsp. japonica (Rice).